The chain runs to 452 residues: Na(+)/H(+) antiporter NhaA (452 aa).

11 helical membrane passes run 27–47, 67–87, 108–128, 137–157, 166–186, 194–214, 216–236, 314–334, 343–363, 381–401, and 414–434; these read FSGI…NSAL, FIGM…FFLM, AFPA…YTLF, GFGI…LLLG, VFLV…IAIF, LWLL…KMGV, SLFP…NCGI, PWSA…VAIS, GVLP…ILGL, WIDI…SIFI, and VAKI…YFFI.

The protein belongs to the NhaA Na(+)/H(+) (TC 2.A.33) antiporter family.

The protein localises to the cell inner membrane. The catalysed reaction is Na(+)(in) + 2 H(+)(out) = Na(+)(out) + 2 H(+)(in). In terms of biological role, na(+)/H(+) antiporter that extrudes sodium in exchange for external protons. This is Na(+)/H(+) antiporter NhaA from Wolinella succinogenes (strain ATCC 29543 / DSM 1740 / CCUG 13145 / JCM 31913 / LMG 7466 / NCTC 11488 / FDC 602W) (Vibrio succinogenes).